The primary structure comprises 804 residues: Pentatricopeptide repeat-containing protein At4g35130, chloroplastic (804 aa).

The N-terminal 19 residues, 1 to 19 (MAATLLSQCYRIYNSDACK), are a transit peptide targeting the chloroplast. 16 PPR repeats span residues 63 to 93 (NDPA…MNKA), 94 to 128 (DAFL…GVKA), 129 to 163 (DTFT…GFVS), 164 to 194 (DVYV…MPER), 195 to 229 (DIVS…GFKP), 230 to 264 (DRFS…RIET), 266 to 296 (DVMV…MIQR), 297 to 332 (NIVA…GLQP), 333 to 363 (DVIT…GFLP), 364 to 394 (HMVL…MAEK), 395 to 429 (NVIS…SLVP), 430 to 464 (DSTT…RYWS), 465 to 495 (NTII…ILLK), 496 to 530 (DVVS…RVNP), 531 to 561 (NKST…MKRE), and 567 to 597 (GIEH…MPFV). Positions 602-677 (IWGSLLNASR…TSSRSTVEAK (76 aa)) are type E motif. Residues 678–708 (GKSHVFTNGDRSHVATNKIYEVLDVVSRMVG) are type E(+) motif. A type DYW motif region spans residues 710–804 (EDIYVHCVSR…NGRCSCGNYW (95 aa)).

Belongs to the PPR family. PCMP-H subfamily.

The protein resides in the plastid. Its subcellular location is the chloroplast. The polypeptide is Pentatricopeptide repeat-containing protein At4g35130, chloroplastic (PCMP-H27) (Arabidopsis thaliana (Mouse-ear cress)).